Here is a 287-residue protein sequence, read N- to C-terminus: Succinate dehydrogenase [ubiquinone] iron-sulfur subunit, mitochondrial (287 aa).

The transit peptide at M1–Y23 directs the protein to the mitochondrion. In terms of domain architecture, 2Fe-2S ferredoxin-type spans F51–P140. [2Fe-2S] cluster-binding residues include C101, C106, C109, and C121. Positions N186 to D216 constitute a 4Fe-4S ferredoxin-type domain. The [4Fe-4S] cluster site is built by C196, C199, and C202. A [3Fe-4S] cluster-binding site is contributed by C206. W211 contacts a ubiquinone. C257 and C263 together coordinate [3Fe-4S] cluster. C267 contacts [4Fe-4S] cluster.

This sequence belongs to the succinate dehydrogenase/fumarate reductase iron-sulfur protein family. As to quaternary structure, component of complex II composed of four subunits: the flavoprotein (FP) SDHA, iron-sulfur protein (IP) SDHB, and a cytochrome b composed of a large and a small subunit. Requires [2Fe-2S] cluster as cofactor. [3Fe-4S] cluster serves as cofactor. The cofactor is [4Fe-4S] cluster.

The protein localises to the mitochondrion inner membrane. It carries out the reaction a quinone + succinate = fumarate + a quinol. It participates in carbohydrate metabolism; tricarboxylic acid cycle; fumarate from succinate (eukaryal route): step 1/1. Its function is as follows. Iron-sulfur protein (IP) subunit of succinate dehydrogenase (SDH) that is involved in complex II of the mitochondrial electron transport chain and is responsible for transferring electrons from succinate to ubiquinone (coenzyme Q). The polypeptide is Succinate dehydrogenase [ubiquinone] iron-sulfur subunit, mitochondrial (sdhB) (Dictyostelium discoideum (Social amoeba)).